Consider the following 562-residue polypeptide: Arginine--tRNA ligase (562 aa).

The short motif at 121–131 (PNIAKPMGMGH) is the 'HIGH' region element.

Belongs to the class-I aminoacyl-tRNA synthetase family. Monomer.

It localises to the cytoplasm. It carries out the reaction tRNA(Arg) + L-arginine + ATP = L-arginyl-tRNA(Arg) + AMP + diphosphate. This Limosilactobacillus fermentum (strain NBRC 3956 / LMG 18251) (Lactobacillus fermentum) protein is Arginine--tRNA ligase.